Here is a 309-residue protein sequence, read N- to C-terminus: Probable manganese-dependent inorganic pyrophosphatase (309 aa).

6 residues coordinate Mn(2+): His9, Asp13, Asp15, Asp75, His97, and Asp149.

Belongs to the PPase class C family. Mn(2+) is required as a cofactor.

It is found in the cytoplasm. The catalysed reaction is diphosphate + H2O = 2 phosphate + H(+). The protein is Probable manganese-dependent inorganic pyrophosphatase of Bacillus licheniformis (strain ATCC 14580 / DSM 13 / JCM 2505 / CCUG 7422 / NBRC 12200 / NCIMB 9375 / NCTC 10341 / NRRL NRS-1264 / Gibson 46).